A 226-amino-acid polypeptide reads, in one-letter code: Orotate phosphoribosyltransferase (226 aa).

Residues Lys26, 73–74, Arg100, Lys101, Lys104, His106, and 128–136 each bind 5-phospho-alpha-D-ribose 1-diphosphate; these read YK and EDVTTSGKS. Thr132 and Arg161 together coordinate orotate.

It belongs to the purine/pyrimidine phosphoribosyltransferase family. PyrE subfamily. Homodimer. It depends on Mg(2+) as a cofactor.

It carries out the reaction orotidine 5'-phosphate + diphosphate = orotate + 5-phospho-alpha-D-ribose 1-diphosphate. It functions in the pathway pyrimidine metabolism; UMP biosynthesis via de novo pathway; UMP from orotate: step 1/2. Its function is as follows. Catalyzes the transfer of a ribosyl phosphate group from 5-phosphoribose 1-diphosphate to orotate, leading to the formation of orotidine monophosphate (OMP). In Agathobacter rectalis (strain ATCC 33656 / DSM 3377 / JCM 17463 / KCTC 5835 / VPI 0990) (Eubacterium rectale), this protein is Orotate phosphoribosyltransferase.